A 359-amino-acid polypeptide reads, in one-letter code: Serpentine receptor class epsilon-26 (359 aa).

Helical transmembrane passes span 29 to 49 (CAISSAELPFYMLSAYVVFVS), 66 to 86 (IGVPMFGSWFLLIAGKLITIL), 127 to 147 (VAGFLEIHFGFSVIFVGLAIV), 172 to 192 (FIIIYQFLAISISLGILFNIL), 195 to 215 (YVLNASWILCILIGTIMYYYI), 256 to 276 (LVFVVLATIVVMGFGIVALVL), and 282 to 302 (FFMHFGENTLFCYPLYIFLVV).

It belongs to the nematode receptor-like protein sre family.

Its subcellular location is the membrane. The polypeptide is Serpentine receptor class epsilon-26 (sre-26) (Caenorhabditis elegans).